A 120-amino-acid chain; its full sequence is Large ribosomal subunit protein uL22 (120 aa).

Belongs to the universal ribosomal protein uL22 family. In terms of assembly, part of the 50S ribosomal subunit.

This protein binds specifically to 23S rRNA; its binding is stimulated by other ribosomal proteins, e.g. L4, L17, and L20. It is important during the early stages of 50S assembly. It makes multiple contacts with different domains of the 23S rRNA in the assembled 50S subunit and ribosome. Functionally, the globular domain of the protein is located near the polypeptide exit tunnel on the outside of the subunit, while an extended beta-hairpin is found that lines the wall of the exit tunnel in the center of the 70S ribosome. In Corynebacterium aurimucosum (strain ATCC 700975 / DSM 44827 / CIP 107346 / CN-1) (Corynebacterium nigricans), this protein is Large ribosomal subunit protein uL22.